We begin with the raw amino-acid sequence, 116 residues long: Large ribosomal subunit protein bL19 (116 aa).

The protein belongs to the bacterial ribosomal protein bL19 family.

This protein is located at the 30S-50S ribosomal subunit interface and may play a role in the structure and function of the aminoacyl-tRNA binding site. This Chloroflexus aurantiacus (strain ATCC 29366 / DSM 635 / J-10-fl) protein is Large ribosomal subunit protein bL19.